A 525-amino-acid polypeptide reads, in one-letter code: ATP synthase subunit alpha (525 aa).

172–179 (GDRQTGKT) is a binding site for ATP.

The protein belongs to the ATPase alpha/beta chains family. In terms of assembly, F-type ATPases have 2 components, CF(1) - the catalytic core - and CF(0) - the membrane proton channel. CF(1) has five subunits: alpha(3), beta(3), gamma(1), delta(1), epsilon(1). CF(0) has three main subunits: a(1), b(2) and c(9-12). The alpha and beta chains form an alternating ring which encloses part of the gamma chain. CF(1) is attached to CF(0) by a central stalk formed by the gamma and epsilon chains, while a peripheral stalk is formed by the delta and b chains.

The protein localises to the cell inner membrane. It carries out the reaction ATP + H2O + 4 H(+)(in) = ADP + phosphate + 5 H(+)(out). In terms of biological role, produces ATP from ADP in the presence of a proton gradient across the membrane. The alpha chain is a regulatory subunit. The polypeptide is ATP synthase subunit alpha (Parabacteroides distasonis (strain ATCC 8503 / DSM 20701 / CIP 104284 / JCM 5825 / NCTC 11152)).